Reading from the N-terminus, the 460-residue chain is Proline--tRNA ligase (460 aa).

The protein belongs to the class-II aminoacyl-tRNA synthetase family. ProS type 3 subfamily. Homodimer.

The protein resides in the cytoplasm. The enzyme catalyses tRNA(Pro) + L-proline + ATP = L-prolyl-tRNA(Pro) + AMP + diphosphate. In terms of biological role, catalyzes the attachment of proline to tRNA(Pro) in a two-step reaction: proline is first activated by ATP to form Pro-AMP and then transferred to the acceptor end of tRNA(Pro). In Methanococcus maripaludis (strain C7 / ATCC BAA-1331), this protein is Proline--tRNA ligase.